Reading from the N-terminus, the 349-residue chain is Macrophage-capping protein (349 aa).

N-acetylmethionine is present on methionine 1. Gelsolin-like repeat units lie at residues 28–107, 147–222, and 264–342; these read KLKP…DLFM, KNIR…AEMI, and LTKV…PIFK. The short motif at 138–147 is the Nuclear localization signal element; the sequence is RKLYQVKGKK. Phosphoserine is present on serine 338.

This sequence belongs to the villin/gelsolin family. Interacts with NUP62. Interacts with NUTF2 and RAN; involved in CAPG nuclear import. In terms of processing, phosphorylated.

The protein localises to the nucleus. It localises to the cytoplasm. The protein resides in the melanosome. It is found in the cell projection. Its subcellular location is the lamellipodium. The protein localises to the ruffle. In terms of biological role, calcium-sensitive protein which reversibly blocks the barbed ends of actin filaments but does not sever preformed actin filaments. May play an important role in macrophage function. May play a role in regulating cytoplasmic and/or nuclear structures through potential interactions with actin. May bind DNA. Uncapping occurs either when Ca(2+) falls or when the concentration of polyphosphoinositide rises, both at low and high Ca(2+). The polypeptide is Macrophage-capping protein (Capg) (Rattus norvegicus (Rat)).